The following is a 306-amino-acid chain: 3-methyl-2-oxobutanoate hydroxymethyltransferase (306 aa).

2 residues coordinate Mg(2+): Asp-53 and Asp-96. 3-methyl-2-oxobutanoate is bound by residues 53–54 (DS), Asp-96, and Lys-126. A Mg(2+)-binding site is contributed by Glu-128. Catalysis depends on Glu-195, which acts as the Proton acceptor.

Belongs to the PanB family. Homodecamer; pentamer of dimers. It depends on Mg(2+) as a cofactor.

It localises to the cytoplasm. The catalysed reaction is 3-methyl-2-oxobutanoate + (6R)-5,10-methylene-5,6,7,8-tetrahydrofolate + H2O = 2-dehydropantoate + (6S)-5,6,7,8-tetrahydrofolate. It functions in the pathway cofactor biosynthesis; (R)-pantothenate biosynthesis; (R)-pantoate from 3-methyl-2-oxobutanoate: step 1/2. In terms of biological role, catalyzes the reversible reaction in which hydroxymethyl group from 5,10-methylenetetrahydrofolate is transferred onto alpha-ketoisovalerate to form ketopantoate. In Anaeromyxobacter dehalogenans (strain 2CP-1 / ATCC BAA-258), this protein is 3-methyl-2-oxobutanoate hydroxymethyltransferase.